Here is a 1133-residue protein sequence, read N- to C-terminus: Early transcription factor large subunit homolog (1133 aa).

The Helicase ATP-binding domain occupies 52–352 (KGGRAFFPCD…PNGQPLQRQQ (301 aa)). 99–106 (WQTGTGKS) is an ATP binding site. The short motif at 281–284 (DEIH) is the DEAH box element. The Helicase C-terminal domain occupies 524–724 (MMKDILSIIR…EGDKALRKHA (201 aa)).

The protein belongs to the DEAD box helicase family. DEAH subfamily.

The protein localises to the virion. It carries out the reaction ATP + H2O = ADP + phosphate + H(+). Functionally, putative initation factor. This chain is Early transcription factor large subunit homolog, found in African swine fever virus (isolate Tick/South Africa/Pretoriuskop Pr4/1996) (ASFV).